Consider the following 419-residue polypeptide: Light-independent protochlorophyllide reductase subunit N (419 aa).

[4Fe-4S] cluster contacts are provided by C17, C42, and C103.

Belongs to the BchN/ChlN family. In terms of assembly, protochlorophyllide reductase is composed of three subunits; ChlL, ChlN and ChlB. Forms a heterotetramer of two ChlB and two ChlN subunits. Requires [4Fe-4S] cluster as cofactor.

The enzyme catalyses chlorophyllide a + oxidized 2[4Fe-4S]-[ferredoxin] + 2 ADP + 2 phosphate = protochlorophyllide a + reduced 2[4Fe-4S]-[ferredoxin] + 2 ATP + 2 H2O. It functions in the pathway porphyrin-containing compound metabolism; chlorophyll biosynthesis (light-independent). Its function is as follows. Component of the dark-operative protochlorophyllide reductase (DPOR) that uses Mg-ATP and reduced ferredoxin to reduce ring D of protochlorophyllide (Pchlide) to form chlorophyllide a (Chlide). This reaction is light-independent. The NB-protein (ChlN-ChlB) is the catalytic component of the complex. The polypeptide is Light-independent protochlorophyllide reductase subunit N (Prochlorococcus marinus (strain NATL1A)).